The sequence spans 350 residues: uncharacterized protein (350 aa).

Mn(2+) is bound by residues D214, D225, H289, E318, and E332.

It belongs to the peptidase M24B family. Mn(2+) serves as cofactor.

This is an uncharacterized protein from Staphylococcus saprophyticus subsp. saprophyticus (strain ATCC 15305 / DSM 20229 / NCIMB 8711 / NCTC 7292 / S-41).